Consider the following 226-residue polypeptide: Ribonuclease 3 (226 aa).

Positions 6–128 constitute an RNase III domain; it reads INRLQRKLGY…LIGGVFLDSN (123 aa). E41 lines the Mg(2+) pocket. D45 is an active-site residue. The Mg(2+) site is built by D114 and E117. E117 is a catalytic residue. The region spanning 155-225 is the DRBM domain; sequence DPKTRLQEYL…AEQALKKLEL (71 aa).

It belongs to the ribonuclease III family. As to quaternary structure, homodimer. Mg(2+) serves as cofactor.

It localises to the cytoplasm. The catalysed reaction is Endonucleolytic cleavage to 5'-phosphomonoester.. In terms of biological role, digests double-stranded RNA. Involved in the processing of primary rRNA transcript to yield the immediate precursors to the large and small rRNAs (23S and 16S). Processes some mRNAs, and tRNAs when they are encoded in the rRNA operon. Processes pre-crRNA and tracrRNA of type II CRISPR loci if present in the organism. The protein is Ribonuclease 3 of Salmonella enteritidis PT4 (strain P125109).